The following is a 714-amino-acid chain: Polyribonucleotide nucleotidyltransferase (714 aa).

2 residues coordinate Mg(2+): D488 and D494. Residues 555–614 (PRIEVMNIPVDKIREVIGSGGKVIREIVEKTGAKINIDDDGTVKIASASGKEIEAARKWI) form the KH domain. The region spanning 624–692 (GQVYEGTVVK…ERGKVRLSMK (69 aa)) is the S1 motif domain.

It belongs to the polyribonucleotide nucleotidyltransferase family. Mg(2+) is required as a cofactor.

The protein localises to the cytoplasm. It carries out the reaction RNA(n+1) + phosphate = RNA(n) + a ribonucleoside 5'-diphosphate. Involved in mRNA degradation. Catalyzes the phosphorolysis of single-stranded polyribonucleotides processively in the 3'- to 5'-direction. In Sinorhizobium medicae (strain WSM419) (Ensifer medicae), this protein is Polyribonucleotide nucleotidyltransferase.